The following is a 155-amino-acid chain: 3-hydroxyacyl-[acyl-carrier-protein] dehydratase FabZ (155 aa).

His-57 is an active-site residue.

It belongs to the thioester dehydratase family. FabZ subfamily.

The protein resides in the cytoplasm. It carries out the reaction a (3R)-hydroxyacyl-[ACP] = a (2E)-enoyl-[ACP] + H2O. In terms of biological role, involved in unsaturated fatty acids biosynthesis. Catalyzes the dehydration of short chain beta-hydroxyacyl-ACPs and long chain saturated and unsaturated beta-hydroxyacyl-ACPs. This is 3-hydroxyacyl-[acyl-carrier-protein] dehydratase FabZ from Sorangium cellulosum (strain So ce56) (Polyangium cellulosum (strain So ce56)).